Reading from the N-terminus, the 284-residue chain is uncharacterized protein (284 aa).

The chain crosses the membrane as a helical span at residues 12–32 (ILFILFVVAFCVYLVPRVAIN).

Belongs to the serine esterase family.

Its subcellular location is the membrane. This is an uncharacterized protein from Escherichia coli (strain K12).